Consider the following 309-residue polypeptide: Coenzyme PQQ synthesis protein B (309 aa).

Belongs to the PqqB family.

It participates in cofactor biosynthesis; pyrroloquinoline quinone biosynthesis. In terms of biological role, may be involved in the transport of PQQ or its precursor to the periplasm. The polypeptide is Coenzyme PQQ synthesis protein B (Bradyrhizobium diazoefficiens (strain JCM 10833 / BCRC 13528 / IAM 13628 / NBRC 14792 / USDA 110)).